The chain runs to 225 residues: Cytochrome c oxidase subunit 2 (225 aa).

Residues 1 to 25 (MSTWMMFMFQESNSLYADNLVSFHN) are Mitochondrial intermembrane-facing. The chain crosses the membrane as a helical span at residues 26–47 (MVMIIVIMISTLTVYIIFDLFL). Topologically, residues 48–62 (NKFSNLYLLKNHNIE) are mitochondrial matrix. Residues 63–82 (IIWMIVPIVILLIICFPSLK) traverse the membrane as a helical segment. Topologically, residues 83–225 (ILYLIDEIVN…YFMNWIYKMN (143 aa)) are mitochondrial intermembrane. Cu cation-binding residues include His-159, Cys-194, Glu-196, Cys-198, His-202, and Met-205. Glu-196 is a Mg(2+) binding site.

It belongs to the cytochrome c oxidase subunit 2 family. As to quaternary structure, component of the cytochrome c oxidase (complex IV, CIV), a multisubunit enzyme composed of a catalytic core of 3 subunits and several supernumerary subunits. The complex exists as a monomer or a dimer and forms supercomplexes (SCs) in the inner mitochondrial membrane with ubiquinol-cytochrome c oxidoreductase (cytochrome b-c1 complex, complex III, CIII). Requires Cu cation as cofactor.

The protein localises to the mitochondrion inner membrane. The catalysed reaction is 4 Fe(II)-[cytochrome c] + O2 + 8 H(+)(in) = 4 Fe(III)-[cytochrome c] + 2 H2O + 4 H(+)(out). Functionally, component of the cytochrome c oxidase, the last enzyme in the mitochondrial electron transport chain which drives oxidative phosphorylation. The respiratory chain contains 3 multisubunit complexes succinate dehydrogenase (complex II, CII), ubiquinol-cytochrome c oxidoreductase (cytochrome b-c1 complex, complex III, CIII) and cytochrome c oxidase (complex IV, CIV), that cooperate to transfer electrons derived from NADH and succinate to molecular oxygen, creating an electrochemical gradient over the inner membrane that drives transmembrane transport and the ATP synthase. Cytochrome c oxidase is the component of the respiratory chain that catalyzes the reduction of oxygen to water. Electrons originating from reduced cytochrome c in the intermembrane space (IMS) are transferred via the dinuclear copper A center (CU(A)) of subunit 2 and heme A of subunit 1 to the active site in subunit 1, a binuclear center (BNC) formed by heme A3 and copper B (CU(B)). The BNC reduces molecular oxygen to 2 water molecules using 4 electrons from cytochrome c in the IMS and 4 protons from the mitochondrial matrix. The protein is Cytochrome c oxidase subunit 2 (COII) of Apis florea (Dwarf honeybee).